The sequence spans 476 residues: UDP-N-acetylmuramoylalanine--D-glutamate ligase (476 aa).

122–128 (GSNAKST) contacts ATP.

It belongs to the MurCDEF family.

It is found in the cytoplasm. The catalysed reaction is UDP-N-acetyl-alpha-D-muramoyl-L-alanine + D-glutamate + ATP = UDP-N-acetyl-alpha-D-muramoyl-L-alanyl-D-glutamate + ADP + phosphate + H(+). The protein operates within cell wall biogenesis; peptidoglycan biosynthesis. Its function is as follows. Cell wall formation. Catalyzes the addition of glutamate to the nucleotide precursor UDP-N-acetylmuramoyl-L-alanine (UMA). This is UDP-N-acetylmuramoylalanine--D-glutamate ligase from Psychrobacter arcticus (strain DSM 17307 / VKM B-2377 / 273-4).